Consider the following 219-residue polypeptide: Transmembrane emp24 domain-containing protein 10 (219 aa).

Positions 1–31 are cleaved as a signal peptide; that stretch reads MSGLSGPPTRRGPFPLALLLLFLLGPSLVLA. The tract at residues 1-142 is required for interaction with STX17; that stretch reads MSGLSGPPTR…KNYEEIAKVE (142 aa). Residues 32 to 185 are Lumenal-facing; that stretch reads ISFHLPINSR…RDTNESTNTR (154 aa). In terms of domain architecture, GOLD spans 41-193; it reads RKCLREEIHK…TRVLYFSIFS (153 aa). Dimethylated arginine occurs at positions 171 and 176. Asn-179 carries N-linked (GlcNAc...) asparagine glycosylation. A helical membrane pass occupies residues 186–206; sequence VLYFSIFSMFCLIGLATWQVF. Residues 204-219 are interaction with COPG1; the sequence is QVFYLRRFFKAKKLIE. Residues 207–219 lie on the Cytoplasmic side of the membrane; it reads YLRRFFKAKKLIE. The interval 207–219 is interaction with ARF1 and IL1B; that stretch reads YLRRFFKAKKLIE. The COPII vesicle coat-binding motif lies at 211–212; it reads FF. Residues 211-219 carry the COPI vesicle coat-binding motif; the sequence is FFKAKKLIE.

This sequence belongs to the EMP24/GP25L family. As to quaternary structure, predominantly dimeric and to a lesser extent monomeric in the ER. Monomer and dimer in ERGIC and cis-Golgi network. Forms homooligomer (via GOLD domain); the assembly is promoted by direct binding with leaderless cargos and may form a protein channel that facilitates cargo entry into the ERGIC. Forms heterooligomeric complexes with other members of the p24 family such as TMED2, TMED7 and TMED9. Interacts (via GOLD domain) with TMED2 (via GOLD domain); the complex is required for export of TMED10 from the ER to the cis-Golgi network; the complex is proposed to be involved in cis-Golgi network dynamics and / or biogenesis. Associates with the COPI vesicle coat subunits (coatomer). Tetramerization of the cytoplasmic domain at the Golgi membrane in vitro; the complex is proposed to interact with COPI coatomer and induce budding of the vesicles. Interacts with COPG1; the interaction involves TMED10 homodimer. Interacts with ARF1 (GDP-bound); the interaction probably involves a TMED10 oligomer. Interacts with SEC23A, SEC24B, SEC24C and SEC24D components of the coat protein complex II/COPII, indicative of an association of TMED10 with the COPII vesicle coat. Interacts with CD59. Interacts with MPPE1/PGAP5; the complex might recruit and sort GPI-anchored proteins to the ER-exit site, or the interaction might lead to recycling of PGAP5 between the ER and the Golgi. Interacts with F2LR1/PAR2. Interacts with KDELR2/ERD2; the interaction is disrupted by KDELR2 ligand. Found in a complex composed at least of SURF4, TMED2 and TMED10. Associates with the presenilin-dependent gamma-secretase complex. Interacts with STX17; the interaction is direct. Interacts with IL-1; the interaction is direct. Interacts with RAB21 (active GTP-bound form); the interaction is indirect and regulates TMED10 abundance and localization at the Golgi.

The protein resides in the endoplasmic reticulum membrane. Its subcellular location is the endoplasmic reticulum-Golgi intermediate compartment membrane. It is found in the golgi apparatus membrane. The protein localises to the golgi apparatus. It localises to the cis-Golgi network membrane. The protein resides in the trans-Golgi network membrane. Its subcellular location is the cytoplasmic vesicle. It is found in the secretory vesicle membrane. The protein localises to the cell membrane. It localises to the melanosome. Its function is as follows. Cargo receptor involved in protein vesicular trafficking and quality control in the endoplasmic reticulum (ER) and Golgi. The p24 protein family is a group of transmembrane proteins that bind coat protein complex I/COPI and coat protein complex II/COPII involved in vesicular trafficking between the membranes. Acts at the lumenal side for incorporation of secretory cargo molecules into transport vesicles and involved in vesicle coat formation at the cytoplasmic side. Mainly functions in the early secretory pathway and cycles between the ER, ER-Golgi intermediate compartment (ERGIC) and Golgi, mediating cargo transport through COPI and COPII-coated vesicles. In COPII vesicle-mediated anterograde transport, involved in the transport of GPI-anchored proteins by acting together with TMED2 as their cargo receptor; the function specifically implies SEC24C and SEC24D of the COPII vesicle coat and lipid raft-like microdomains of the ER. Recognizes GPI anchors structural remodeled in the ER by the GPI inositol-deacylase/PGAP1 and the metallophosphoesterase MPPE1/PGAP5. In COPI vesicle-mediated retrograde transport, involved in the biogenesis of COPI vesicles and vesicle coat recruitment. Involved in trafficking of amyloid beta A4 protein and soluble APP-beta release (independent from the modulation of gamma-secretase activity). Involved in the KDELR2-mediated retrograde transport of the toxin A subunit (CTX-A-K63)together with COPI and the COOH terminus of KDELR2. On Golgi membranes, acts as a primary receptor for ARF1-GDP, a GTP-binding protein involved in COPI-vesicle formation. Increases coatomer-dependent GTPase-activating activity of ARFGAP2 which mediates the hydrolysis of ARF1-bound GTP and therefore modulates protein trafficking from the Golgi apparatus. Involved in the exocytic trafficking of G protein-coupled receptors F2LR1/PAR2 (trypsin and tryspin-like enzyme receptor), OPRM1 (opioid receptor) and P2RY4 (UTD and UDP receptor) from the Golgi to the plasma membrane, thus contributing to receptor resensitization. In addition to its cargo receptor activity, may also act as a protein channel after oligomerization, facilitating the post-translational entry of leaderless cytoplasmic cargo into the ERGIC. Involved in the translocation into ERGIC, the vesicle entry and the secretion of leaderless cargos (lacking the secretion signal sequence), including the mature form of interleukin 1/IL-1 family members, the alpha-crystallin B chain HSPB5, the carbohydrate-binding proteins galectin-1/LGALS1 and galectin-3/LGALS3, the microtubule-associated protein Tau/MAPT, and the annexin A1/ANXA1; the translocation process is dependent on cargo protein unfolding and enhanced by chaperones HSP90AB1 and HSP90B1/GRP9. Could also associates with the presenilin-dependent gamma-secretase complex in order to regulate gamma-cleavages of the amyloid beta A4 protein to yield amyloid-beta 40/Abeta40. The protein is Transmembrane emp24 domain-containing protein 10 (TMED10) of Pongo abelii (Sumatran orangutan).